We begin with the raw amino-acid sequence, 931 residues long: Isoleucine--tRNA ligase (931 aa).

Positions 57–67 (PFANGNIHMGH) match the 'HIGH' region motif. Glutamate 556 is an L-isoleucyl-5'-AMP binding site. The short motif at 597-601 (KMSKS) is the 'KMSKS' region element. Residue lysine 600 participates in ATP binding. 4 residues coordinate Zn(2+): cysteine 890, cysteine 893, cysteine 910, and cysteine 913.

It belongs to the class-I aminoacyl-tRNA synthetase family. IleS type 1 subfamily. As to quaternary structure, monomer. Zn(2+) is required as a cofactor.

It localises to the cytoplasm. The enzyme catalyses tRNA(Ile) + L-isoleucine + ATP = L-isoleucyl-tRNA(Ile) + AMP + diphosphate. Its function is as follows. Catalyzes the attachment of isoleucine to tRNA(Ile). As IleRS can inadvertently accommodate and process structurally similar amino acids such as valine, to avoid such errors it has two additional distinct tRNA(Ile)-dependent editing activities. One activity is designated as 'pretransfer' editing and involves the hydrolysis of activated Val-AMP. The other activity is designated 'posttransfer' editing and involves deacylation of mischarged Val-tRNA(Ile). The protein is Isoleucine--tRNA ligase of Lactobacillus delbrueckii subsp. bulgaricus (strain ATCC BAA-365 / Lb-18).